A 273-amino-acid polypeptide reads, in one-letter code: Ribosomal RNA small subunit methyltransferase A (273 aa).

Residues asparagine 25, leucine 27, glycine 52, glutamate 73, aspartate 99, and asparagine 118 each contribute to the S-adenosyl-L-methionine site.

It belongs to the class I-like SAM-binding methyltransferase superfamily. rRNA adenine N(6)-methyltransferase family. RsmA subfamily.

It localises to the cytoplasm. The enzyme catalyses adenosine(1518)/adenosine(1519) in 16S rRNA + 4 S-adenosyl-L-methionine = N(6)-dimethyladenosine(1518)/N(6)-dimethyladenosine(1519) in 16S rRNA + 4 S-adenosyl-L-homocysteine + 4 H(+). Its function is as follows. Specifically dimethylates two adjacent adenosines (A1518 and A1519) in the loop of a conserved hairpin near the 3'-end of 16S rRNA in the 30S particle. May play a critical role in biogenesis of 30S subunits. The protein is Ribosomal RNA small subunit methyltransferase A of Novosphingobium aromaticivorans (strain ATCC 700278 / DSM 12444 / CCUG 56034 / CIP 105152 / NBRC 16084 / F199).